A 681-amino-acid chain; its full sequence is CAI-1 autoinducer sensor kinase/phosphatase CqsS (681 aa).

4 helical membrane-spanning segments follow: residues 17 to 37, 73 to 93, 112 to 132, and 148 to 168; these read LVGW…EFMF, AYYQ…MLLM, ILLV…IGLA, and MDWT…LFYF. The 227-residue stretch at 187-413 folds into the Histidine kinase domain; it reads GIAHEMRNPL…QFTMTFPTIG (227 aa). Histidine 190 carries the post-translational modification Phosphohistidine; by autocatalysis. The 118-residue stretch at 564-681 folds into the Response regulatory domain; the sequence is TIMVVDDNES…RLFDKIANWI (118 aa). Aspartate 613 bears the 4-aspartylphosphate mark.

The protein resides in the cell membrane. It catalyses the reaction ATP + protein L-histidine = ADP + protein N-phospho-L-histidine.. Senses the quorum-sensing autoinducer CAI-1 ((S)-3-hydroxytridecan-4-one) which probably functions as an intragenus signal. The sensory signal is then relayed to LuxU and LuxO. The chain is CAI-1 autoinducer sensor kinase/phosphatase CqsS (cqsS) from Vibrio campbellii (strain ATCC BAA-1116).